A 260-amino-acid polypeptide reads, in one-letter code: Tryptophan synthase alpha chain (260 aa).

Residues E52 and D63 each act as proton acceptor in the active site.

This sequence belongs to the TrpA family. Tetramer of two alpha and two beta chains.

It carries out the reaction (1S,2R)-1-C-(indol-3-yl)glycerol 3-phosphate + L-serine = D-glyceraldehyde 3-phosphate + L-tryptophan + H2O. Its pathway is amino-acid biosynthesis; L-tryptophan biosynthesis; L-tryptophan from chorismate: step 5/5. Functionally, the alpha subunit is responsible for the aldol cleavage of indoleglycerol phosphate to indole and glyceraldehyde 3-phosphate. This is Tryptophan synthase alpha chain from Streptococcus thermophilus (strain ATCC BAA-491 / LMD-9).